Consider the following 411-residue polypeptide: Na(+)-translocating NADH-quinone reductase subunit F (411 aa).

A helical membrane pass occupies residues 5–25 (VILALGIAAFTVIVLVLVAII). Residues 36–130 (GDITIDINDD…NMEVELPEEI (95 aa)) form the 2Fe-2S ferredoxin-type domain. [2Fe-2S] cluster-binding residues include Cys73, Cys79, Cys82, and Cys114. The FAD-binding FR-type domain occupies 133-273 (VKKWECTVIS…SGPFGEFFAK (141 aa)). The interval 276 to 393 (DAEMVFIGGG…PVMNAAVIKM (118 aa)) is catalytic.

Belongs to the NqrF family. Composed of six subunits; NqrA, NqrB, NqrC, NqrD, NqrE and NqrF. It depends on [2Fe-2S] cluster as a cofactor. FAD is required as a cofactor.

It is found in the cell inner membrane. The catalysed reaction is a ubiquinone + n Na(+)(in) + NADH + H(+) = a ubiquinol + n Na(+)(out) + NAD(+). In terms of biological role, NQR complex catalyzes the reduction of ubiquinone-1 to ubiquinol by two successive reactions, coupled with the transport of Na(+) ions from the cytoplasm to the periplasm. The first step is catalyzed by NqrF, which accepts electrons from NADH and reduces ubiquinone-1 to ubisemiquinone by a one-electron transfer pathway. This chain is Na(+)-translocating NADH-quinone reductase subunit F, found in Haemophilus influenzae (strain ATCC 51907 / DSM 11121 / KW20 / Rd).